A 163-amino-acid chain; its full sequence is MEQNEFGLVEKIVYLNRVAKVVKGGRRFSFSALVVVGDAKGAVGFGLGKAQEVPEALRKATERAKKDMVQIPLVDGTLPYEILGEFGAGCVMLKPASKGTGIIAGGAVRAVMEAVGVTDVLAKAIGTNNPHNVLRATMAGLTSLRSAEYVSQLRGMKLEAPRK.

The S5 DRBM domain maps to 8 to 71 (LVEKIVYLNR…ERAKKDMVQI (64 aa)).

The protein belongs to the universal ribosomal protein uS5 family. Part of the 30S ribosomal subunit. Contacts proteins S4 and S8.

Functionally, with S4 and S12 plays an important role in translational accuracy. In terms of biological role, located at the back of the 30S subunit body where it stabilizes the conformation of the head with respect to the body. The polypeptide is Small ribosomal subunit protein uS5 (Nitratidesulfovibrio vulgaris (strain DSM 19637 / Miyazaki F) (Desulfovibrio vulgaris)).